A 194-amino-acid chain; its full sequence is Small ribosomal subunit protein uS5 (194 aa).

Residues 26-89 (LEEKVVEIRR…ADAKKRIIKV (64 aa)) form the S5 DRBM domain.

Belongs to the universal ribosomal protein uS5 family. Part of the 30S ribosomal subunit. Contacts proteins S4 and S8.

Its function is as follows. With S4 and S12 plays an important role in translational accuracy. In terms of biological role, located at the back of the 30S subunit body where it stabilizes the conformation of the head with respect to the body. This chain is Small ribosomal subunit protein uS5, found in Sulfurihydrogenibium sp. (strain YO3AOP1).